A 646-amino-acid polypeptide reads, in one-letter code: Centrosomal protein of 72 kDa (646 aa).

3 LRR repeats span residues 28-49 (ELRSLSIPGTYQEKITHLGNSL), 54-75 (ALKSLDLSRNSLVSLEGIQYLV), and 76-97 (SLESLNLYYNCISSLAEVFRLH). The LRRCT domain maps to 110 to 149 (NPVVKNESDYRLFVVHMLPKLRQLDDRPVRESERKASQLH). Residues serine 117 and serine 236 each carry the phosphoserine modification. 2 disordered regions span residues 300–342 (SVDV…RFQV) and 357–399 (GPSS…SDPR). Low complexity predominate over residues 307-319 (ASSAQKSSLSSQK). The residue at position 380 (serine 380) is a Phosphoserine. Residues 383–392 (EALEAEERTS) are compositionally biased toward basic and acidic residues. Position 402 is a phosphoserine (serine 402). A coiled-coil region spans residues 476-622 (LSLENKTLQS…RAEVEQMRWS (147 aa)).

It belongs to the CEP72 family. Interacts with KIZ, PCM1 and CDK5RAP2.

The protein localises to the cytoplasm. It is found in the cytoskeleton. It localises to the microtubule organizing center. Its subcellular location is the centrosome. The protein resides in the centriolar satellite. Functionally, involved in the recruitment of key centrosomal proteins to the centrosome. Provides centrosomal microtubule-nucleation activity on the gamma-tubulin ring complexes (gamma-TuRCs) and has critical roles in forming a focused bipolar spindle, which is needed for proper tension generation between sister chromatids. Required for localization of KIZ, AKAP9 and gamma-tubulin ring complexes (gamma-TuRCs). Involved in centriole duplication. Required for CDK5RAP22, CEP152, WDR62 and CEP63 centrosomal localization and promotes the centrosomal localization of CDK2. This chain is Centrosomal protein of 72 kDa (Cep72), found in Mus musculus (Mouse).